The following is a 276-amino-acid chain: Formamidopyrimidine-DNA glycosylase (276 aa).

Proline 2 acts as the Schiff-base intermediate with DNA in catalysis. Glutamate 3 acts as the Proton donor in catalysis. The active-site Proton donor; for beta-elimination activity is lysine 58. The DNA site is built by histidine 92, arginine 111, and lysine 154. Residues glutamine 239–valine 273 form an FPG-type zinc finger. The Proton donor; for delta-elimination activity role is filled by arginine 263.

It belongs to the FPG family. Monomer. Requires Zn(2+) as cofactor.

It catalyses the reaction Hydrolysis of DNA containing ring-opened 7-methylguanine residues, releasing 2,6-diamino-4-hydroxy-5-(N-methyl)formamidopyrimidine.. The catalysed reaction is 2'-deoxyribonucleotide-(2'-deoxyribose 5'-phosphate)-2'-deoxyribonucleotide-DNA = a 3'-end 2'-deoxyribonucleotide-(2,3-dehydro-2,3-deoxyribose 5'-phosphate)-DNA + a 5'-end 5'-phospho-2'-deoxyribonucleoside-DNA + H(+). Involved in base excision repair of DNA damaged by oxidation or by mutagenic agents. Acts as a DNA glycosylase that recognizes and removes damaged bases. Has a preference for oxidized purines, such as 7,8-dihydro-8-oxoguanine (8-oxoG). Has AP (apurinic/apyrimidinic) lyase activity and introduces nicks in the DNA strand. Cleaves the DNA backbone by beta-delta elimination to generate a single-strand break at the site of the removed base with both 3'- and 5'-phosphates. The polypeptide is Formamidopyrimidine-DNA glycosylase (Lactobacillus helveticus (strain DPC 4571)).